The following is a 184-amino-acid chain: NADH-quinone oxidoreductase subunit B (184 aa).

The [4Fe-4S] cluster site is built by Cys-37, Cys-38, Cys-103, and Cys-132.

This sequence belongs to the complex I 20 kDa subunit family. As to quaternary structure, NDH-1 is composed of 14 different subunits. Subunits NuoB, C, D, E, F, and G constitute the peripheral sector of the complex. The cofactor is [4Fe-4S] cluster.

It is found in the cell membrane. The enzyme catalyses a quinone + NADH + 5 H(+)(in) = a quinol + NAD(+) + 4 H(+)(out). Functionally, NDH-1 shuttles electrons from NADH, via FMN and iron-sulfur (Fe-S) centers, to quinones in the respiratory chain. The immediate electron acceptor for the enzyme in this species is believed to be a menaquinone. Couples the redox reaction to proton translocation (for every two electrons transferred, four hydrogen ions are translocated across the cytoplasmic membrane), and thus conserves the redox energy in a proton gradient. The chain is NADH-quinone oxidoreductase subunit B from Nocardia farcinica (strain IFM 10152).